The sequence spans 459 residues: Exodeoxyribonuclease 7 large subunit (459 aa).

Belongs to the XseA family. In terms of assembly, heterooligomer composed of large and small subunits.

It localises to the cytoplasm. The enzyme catalyses Exonucleolytic cleavage in either 5'- to 3'- or 3'- to 5'-direction to yield nucleoside 5'-phosphates.. Its function is as follows. Bidirectionally degrades single-stranded DNA into large acid-insoluble oligonucleotides, which are then degraded further into small acid-soluble oligonucleotides. The chain is Exodeoxyribonuclease 7 large subunit from Pseudomonas fluorescens (strain ATCC BAA-477 / NRRL B-23932 / Pf-5).